A 305-amino-acid chain; its full sequence is MGAKSMEGMNLKQTAIADFHHVSVLPTALVEGLEPKPGGYYLDATVGAGGHSERLLKLGIPLALTMIDRDVQAIAAAMERLQPLVADRKDISINTWQGNFADFPGQLEQFDGIIADLGVSSPQLDQGDRGFSFRHTAPLDMRMDQSQDLTAAEIINHWSEKDLARIFYEYGEERLSRRIARQIVEQRPFQTTTDLAEAITKWVPGKYRHGRIHPATRTFQGLRIAVNDELGSLEKFIAQAPHWLKSGGKFGIISFHSLEDRIVKHRFRETENLRVLTKKPIIAGEEEQRQNPRARSAKLRWAEKI.

Residues 49-51 (GGH), Asp-68, Phe-100, Asp-116, and Gln-123 each bind S-adenosyl-L-methionine.

The protein belongs to the methyltransferase superfamily. RsmH family.

Its subcellular location is the cytoplasm. It catalyses the reaction cytidine(1402) in 16S rRNA + S-adenosyl-L-methionine = N(4)-methylcytidine(1402) in 16S rRNA + S-adenosyl-L-homocysteine + H(+). Specifically methylates the N4 position of cytidine in position 1402 (C1402) of 16S rRNA. The chain is Ribosomal RNA small subunit methyltransferase H from Synechocystis sp. (strain ATCC 27184 / PCC 6803 / Kazusa).